Reading from the N-terminus, the 72-residue chain is Translation initiation factor IF-1 (72 aa).

An S1-like domain is found at 1 to 72; the sequence is MAKDDVIEIE…TKGRITYRFK (72 aa).

This sequence belongs to the IF-1 family. Component of the 30S ribosomal translation pre-initiation complex which assembles on the 30S ribosome in the order IF-2 and IF-3, IF-1 and N-formylmethionyl-tRNA(fMet); mRNA recruitment can occur at any time during PIC assembly.

The protein localises to the cytoplasm. One of the essential components for the initiation of protein synthesis. Stabilizes the binding of IF-2 and IF-3 on the 30S subunit to which N-formylmethionyl-tRNA(fMet) subsequently binds. Helps modulate mRNA selection, yielding the 30S pre-initiation complex (PIC). Upon addition of the 50S ribosomal subunit IF-1, IF-2 and IF-3 are released leaving the mature 70S translation initiation complex. This is Translation initiation factor IF-1 from Latilactobacillus sakei subsp. sakei (strain 23K) (Lactobacillus sakei subsp. sakei).